The sequence spans 369 residues: Nudix hydrolase 8 (369 aa).

A Nudix hydrolase domain is found at 188-318; sequence SHQVGVGGFV…GDKMFKRVIE (131 aa). Positions 225–246 match the Nudix box motif; it reads GFINESEEIFSGAVREVKEETG. Mg(2+) contacts are provided by Glu-240 and Glu-244.

This sequence belongs to the Nudix hydrolase family. Mg(2+) serves as cofactor. The cofactor is Mn(2+). As to expression, expressed in roots, stems and, at lower level, leaves.

Its function is as follows. Probably mediates the hydrolysis of some nucleoside diphosphate derivatives. May be involved in plant immunity and act as a positive regulator of defense response through salicylic acid (SA) signaling. The sequence is that of Nudix hydrolase 8 (NUDT8) from Arabidopsis thaliana (Mouse-ear cress).